Here is a 384-residue protein sequence, read N- to C-terminus: ATP phosphoribosyltransferase regulatory subunit (384 aa).

The protein belongs to the class-II aminoacyl-tRNA synthetase family. HisZ subfamily. Heteromultimer composed of HisG and HisZ subunits.

It is found in the cytoplasm. It participates in amino-acid biosynthesis; L-histidine biosynthesis; L-histidine from 5-phospho-alpha-D-ribose 1-diphosphate: step 1/9. Functionally, required for the first step of histidine biosynthesis. May allow the feedback regulation of ATP phosphoribosyltransferase activity by histidine. The chain is ATP phosphoribosyltransferase regulatory subunit from Paracidovorax citrulli (strain AAC00-1) (Acidovorax citrulli).